The primary structure comprises 25 residues: Flagellar filament core protein flaB3 (25 aa).

This sequence belongs to the bacterial flagellin family. In terms of assembly, the flagellum consists of an outer layer composed of two sheath proteins, flaA1 (44 kDa) and flaA2 (35 kDa) around a core that contains three proteins flaB1 (37 kDa), flaB2 (34 kDa) and flaB3 (32 kDa).

Its subcellular location is the periplasmic flagellum. It localises to the periplasm. Component of the core of the flagella. The chain is Flagellar filament core protein flaB3 (flaB3) from Brachyspira hyodysenteriae (Treponema hyodysenteriae).